The sequence spans 111 residues: MTRDGDNSELNQIKSKIQEHLVSSGNYELISKQLKLQLIESGWYDKVAQIAMDELNNSSSKDTKDGGRAYTTKSLSDLYTVVKPKAEGLVPNEVRENMLKRIELYLDDLIE.

Belongs to the ENY2 family. In terms of assembly, component of the nuclear pore complex (NPC)-associated TREX-2 complex (transcription and export complex 2), composed of at least SUS1, SAC3, THP1, SEM1, and CDC31. TREX-2 contains 2 SUS1 chains. The TREX-2 complex interacts with the nucleoporin NUP1. Component of the 1.8 MDa SAGA transcription coactivator-HAT complex. SAGA is built of 5 distinct domains with specialized functions. Within the SAGA complex, SUS1, SGF11, SGF73 and UBP8 form an additional subcomplex of SAGA called the DUB module (deubiquitination module). Interacts directly with THP1, SAC3, SGF11, and with the RNA polymerase II.

The protein localises to the nucleus. Its subcellular location is the nucleoplasm. It localises to the cytoplasm. It is found in the P-body. Functionally, involved in mRNA export coupled transcription activation by association with both the TREX-2 and the SAGA complexes. At the promoters, SAGA is required for recruitment of the basal transcription machinery. It influences RNA polymerase II transcriptional activity through different activities such as TBP interaction and promoter selectivity, interaction with transcription activators, and chromatin modification through histone acetylation and deubiquitination. Within the SAGA complex, participates in a subcomplex required for deubiquitination of H2B and for the maintenance of steady-state H3 methylation levels. The TREX-2 complex functions in docking export-competent ribonucleoprotein particles (mRNPs) to the nuclear entrance of the nuclear pore complex (nuclear basket). TREX-2 participates in mRNA export and accurate chromatin positioning in the nucleus by tethering genes to the nuclear periphery. May also be involved in cytoplasmic mRNA decay by interaction with components of P-bodies. This is Transcription and mRNA export factor SUS1 from Lodderomyces elongisporus (strain ATCC 11503 / CBS 2605 / JCM 1781 / NBRC 1676 / NRRL YB-4239) (Yeast).